Consider the following 745-residue polypeptide: Putative cryptochrome DASH, mitochondrial (745 aa).

The transit peptide at 1-22 (MAPSKVVIYAMRRELRLSDNPI) directs the protein to the mitochondrion. The region spanning 23–166 (FHHLSNPESK…DFKLWDDEKY (144 aa)) is the Photolyase/cryptochrome alpha/beta domain. Disordered stretches follow at residues 563–688 (KFNL…GGGG) and 702–745 (GGYR…QTDA). Residues 571–584 (SKVKKRPFFRKRGT) show a composition bias toward basic residues. The span at 591–603 (GSAESPGSSDSHS) shows a compositional bias: low complexity. Residues 604–616 (GSGGSPDGSGGGN) show a composition bias toward gly residues. The segment covering 632–648 (QQTHQGSGRSQSSSNHG) has biased composition (low complexity). Composition is skewed to gly residues over residues 672 to 688 (RGGG…GGGG) and 702 to 718 (GGYR…GGFR). The span at 735-745 (QQVASQFQTDA) shows a compositional bias: polar residues.

It belongs to the DNA photolyase class-1 family. FAD serves as cofactor. It depends on (6R)-5,10-methylene-5,6,7,8-tetrahydrofolate as a cofactor.

Its subcellular location is the mitochondrion. In terms of biological role, may have a photoreceptor function. This Neurospora crassa (strain ATCC 24698 / 74-OR23-1A / CBS 708.71 / DSM 1257 / FGSC 987) protein is Putative cryptochrome DASH, mitochondrial (cry).